The primary structure comprises 199 residues: Ribonuclease P protein subunit p25 (199 aa).

Basic and acidic residues predominate over residues 1 to 11; the sequence is MENFRKVRSEE. 2 disordered regions span residues 1–31 and 146–199; these read MENFRKVRSEEAPAGDGDEGGSPNSGPFADL and PRQL…DRTA. The residue at position 172 (Ser172) is a Phosphoserine. Acidic residues predominate over residues 190-199; the sequence is PEAENEDRTA.

The protein belongs to the histone-like Alba family. In terms of assembly, component of nuclear RNase P and RNase MRP ribonucleoproteins. RNase P consists of a catalytic RNA moiety and 10 different protein chains; POP1, POP4, POP5, POP7, RPP14, RPP21, RPP25, RPP30, RPP38 and RPP40. Within the RNase P complex, POP1, POP7 and RPP25 form the 'finger' subcomplex, POP5, RPP14, RPP40 and homodimeric RPP30 form the 'palm' subcomplex, and RPP21, POP4 and RPP38 form the 'wrist' subcomplex. All subunits of the RNase P complex interact with the catalytic RNA. Several subunits of RNase P are also part of the RNase MRP complex. RNase MRP consists of a catalytic RNA moiety and about 8 protein subunits; POP1, POP7, RPP25, RPP30, RPP38, RPP40 and possibly also POP4 and POP5. POP7 forms a heterodimer with RPP25 that binds to the P3 stem loop of the catalytic RNA.

It localises to the nucleus. It is found in the nucleolus. Functionally, component of ribonuclease P, a ribonucleoprotein complex that generates mature tRNA molecules by cleaving their 5'-ends. Also a component of the MRP ribonuclease complex, which cleaves pre-rRNA sequences. The protein is Ribonuclease P protein subunit p25 (Rpp25) of Mus musculus (Mouse).